Reading from the N-terminus, the 214-residue chain is Small ribosomal subunit protein uS5 (214 aa).

Residues 54–117 (LKYEVVDIKV…RDAKMNILPV (64 aa)) form the S5 DRBM domain.

Belongs to the universal ribosomal protein uS5 family. In terms of assembly, part of the 30S ribosomal subunit. Contacts protein S4.

Functionally, with S4 and S12 plays an important role in translational accuracy. This is Small ribosomal subunit protein uS5 from Saccharolobus islandicus (strain Y.N.15.51 / Yellowstone #2) (Sulfolobus islandicus).